Reading from the N-terminus, the 173-residue chain is MKETIRIIGIDPGLRRTGWGIVESLGNSLHFIGSGTVTSNAEMDLASRLCQLHEGLSKVLHEFMPHEAAVEHTFVNKDATATLKLGQARGIALLAPAQAGLPVAEYAPNAVKKAVIGVGHGEKQQIHMMVKVLMPRASFDTSDAADALAIAICHAHHRQSIVSARRMQALLAG.

Residues Asp-11, Glu-71, and Asp-143 contribute to the active site. 3 residues coordinate Mg(2+): Asp-11, Glu-71, and Asp-143.

This sequence belongs to the RuvC family. Homodimer which binds Holliday junction (HJ) DNA. The HJ becomes 2-fold symmetrical on binding to RuvC with unstacked arms; it has a different conformation from HJ DNA in complex with RuvA. In the full resolvosome a probable DNA-RuvA(4)-RuvB(12)-RuvC(2) complex forms which resolves the HJ. Mg(2+) serves as cofactor.

The protein resides in the cytoplasm. The catalysed reaction is Endonucleolytic cleavage at a junction such as a reciprocal single-stranded crossover between two homologous DNA duplexes (Holliday junction).. In terms of biological role, the RuvA-RuvB-RuvC complex processes Holliday junction (HJ) DNA during genetic recombination and DNA repair. Endonuclease that resolves HJ intermediates. Cleaves cruciform DNA by making single-stranded nicks across the HJ at symmetrical positions within the homologous arms, yielding a 5'-phosphate and a 3'-hydroxyl group; requires a central core of homology in the junction. The consensus cleavage sequence is 5'-(A/T)TT(C/G)-3'. Cleavage occurs on the 3'-side of the TT dinucleotide at the point of strand exchange. HJ branch migration catalyzed by RuvA-RuvB allows RuvC to scan DNA until it finds its consensus sequence, where it cleaves and resolves the cruciform DNA. This Brucella abortus (strain 2308) protein is Crossover junction endodeoxyribonuclease RuvC.